The primary structure comprises 367 residues: 4-hydroxy-3-methylbut-2-en-1-yl diphosphate synthase (flavodoxin) (367 aa).

Residues Cys-265, Cys-268, Cys-300, and Glu-307 each coordinate [4Fe-4S] cluster.

The protein belongs to the IspG family. It depends on [4Fe-4S] cluster as a cofactor.

The enzyme catalyses (2E)-4-hydroxy-3-methylbut-2-enyl diphosphate + oxidized [flavodoxin] + H2O + 2 H(+) = 2-C-methyl-D-erythritol 2,4-cyclic diphosphate + reduced [flavodoxin]. The protein operates within isoprenoid biosynthesis; isopentenyl diphosphate biosynthesis via DXP pathway; isopentenyl diphosphate from 1-deoxy-D-xylulose 5-phosphate: step 5/6. Its function is as follows. Converts 2C-methyl-D-erythritol 2,4-cyclodiphosphate (ME-2,4cPP) into 1-hydroxy-2-methyl-2-(E)-butenyl 4-diphosphate. This is 4-hydroxy-3-methylbut-2-en-1-yl diphosphate synthase (flavodoxin) from Bacillus anthracis.